The primary structure comprises 119 residues: Holo-[acyl-carrier-protein] synthase (119 aa).

Mg(2+) contacts are provided by D7 and E53.

The protein belongs to the P-Pant transferase superfamily. AcpS family. Mg(2+) is required as a cofactor.

It is found in the cytoplasm. The enzyme catalyses apo-[ACP] + CoA = holo-[ACP] + adenosine 3',5'-bisphosphate + H(+). Its function is as follows. Transfers the 4'-phosphopantetheine moiety from coenzyme A to a Ser of acyl-carrier-protein. This Dehalococcoides mccartyi (strain CBDB1) protein is Holo-[acyl-carrier-protein] synthase.